An 833-amino-acid chain; its full sequence is RNA-binding protein 5-A (833 aa).

Residues 1-87 are disordered; the sequence is MGSDKRVSRS…GYHSDGDYMD (87 aa). The region spanning 102–182 is the RRM 1 domain; it reads KTIMLRGLPI…KTIAMHYSNP (81 aa). The RanBP2-type zinc finger occupies 185 to 214; the sequence is KFEDWLCNKCGLYNFRRRLKCFRCGAAKAE. An RRM 2 domain is found at 241-325; that stretch reads SAIILRNIGP…KTIGVDFAKS (85 aa). Residues 396–428 show a composition bias toward polar residues; that stretch reads TGAAEQGTAPQAESSSPVPATTSAVVCQSPQMY. Disordered stretches follow at residues 396–458 and 523–559; these read TGAA…EEAA and AADG…TAQQ. The span at 429–458 shows a compositional bias: low complexity; that stretch reads QQPGSPTQSSTSTVAASATPASGTSAEEAA. Residues 667–692 form a C2H2-type zinc finger; it reads LACLLCRRQFPNKDALTRHQQLSDLH. The region spanning 761 to 807 is the G-patch domain; it reads NSNIGNKMLQAMGWKEGSGLGRKSQGITAPIQAQVRMRGAGLGAKGS.

Belongs to the RBM5/RBM10 family. In terms of assembly, component of the spliceosome A complex (also known as the prespliceosome). Appears to dissociate from the spliceosome upon formation of the spliceosome B complex (also known as the precatalytic spliceosome), in which the heterotrimeric U4/U6.U5 snRNPs are bound.

Its subcellular location is the nucleus. Component of the spliceosome A complex. Regulates alternative splicing of a number of mRNAs. May modulate splice site pairing after recruitment of the U1 and U2 snRNPs to the 5' and 3' splice sites of the intron. This Xenopus laevis (African clawed frog) protein is RNA-binding protein 5-A (rbm5-a).